Consider the following 206-residue polypeptide: Small ribosomal subunit protein uS5 (206 aa).

The segment covering 1–15 (MTDTPTKQEIQSKND) has biased composition (polar residues). The tract at residues 1-50 (MTDTPTKQEIQSKNDNVPGATPVEQKKNNRNDRKRNRRGDSKNLERDSDW) is disordered. A compositionally biased stretch (basic and acidic residues) spans 38 to 50 (RGDSKNLERDSDW). The 64-residue stretch at 50 to 113 (WQERVVQIRR…SDGKKNLVRV (64 aa)) folds into the S5 DRBM domain.

This sequence belongs to the universal ribosomal protein uS5 family. In terms of assembly, part of the 30S ribosomal subunit. Contacts proteins S4 and S8.

With S4 and S12 plays an important role in translational accuracy. In terms of biological role, located at the back of the 30S subunit body where it stabilizes the conformation of the head with respect to the body. In Prochlorococcus marinus (strain MIT 9301), this protein is Small ribosomal subunit protein uS5.